Reading from the N-terminus, the 432-residue chain is MPAVVLIGAQWGDEGKGKVTDLLGGRAQWVVRYQGGNNAGHTVVLPTGENFTLHLIPSGVLTPGVTNVIGNGVVVDPGVLLSELQGLEDRGVDTSQLLISADAHLLMPYHVAIDKVTERYMGNKKIGTTGRGIGPCYQDKIARMGIRVADVLEPGELTHKIEAALEFKNQVLVKIYNRKALDLAQVVETLLEQAQQFRHRITDTRLLLNDALEAGETVLLEGAQGTLLDVDHGTYPYVTSSNPTAGGAALGSGIGPTRIHTVLGILKAYTTRVGSGPFPTELFDENGEYLAKTGSEIGVTTGRRRRCGWFDAVIARYATRVNGITDYFLTKLDVLSSLETVPVCVGYQIAGVRTHDMPITQSDLARAEPIYEELPGWWEDISGAREFEDLPAKARDYVLRLEELAGAQVACIGVGPGRDQTIVRCDVLRSRR.

GTP contacts are provided by residues 12–18 (GDEGKGK) and 40–42 (GHT). D13 (proton acceptor) is an active-site residue. Positions 13 and 40 each coordinate Mg(2+). Residues 13 to 16 (DEGK), 38 to 41 (NAGH), T129, R143, Q224, T239, and R303 contribute to the IMP site. H41 (proton donor) is an active-site residue. Substrate is bound at residue 299–305 (VTTGRRR). GTP is bound by residues R305, 331–333 (KLD), and 413–415 (GVG).

It belongs to the adenylosuccinate synthetase family. Homodimer. Mg(2+) serves as cofactor.

It localises to the cytoplasm. The catalysed reaction is IMP + L-aspartate + GTP = N(6)-(1,2-dicarboxyethyl)-AMP + GDP + phosphate + 2 H(+). The protein operates within purine metabolism; AMP biosynthesis via de novo pathway; AMP from IMP: step 1/2. In terms of biological role, plays an important role in the de novo pathway of purine nucleotide biosynthesis. Catalyzes the first committed step in the biosynthesis of AMP from IMP. This chain is Adenylosuccinate synthetase, found in Mycobacterium leprae (strain TN).